The primary structure comprises 348 residues: Phospho-2-dehydro-3-deoxyheptonate aldolase, Trp-sensitive (348 aa).

The protein belongs to the class-I DAHP synthase family.

The enzyme catalyses D-erythrose 4-phosphate + phosphoenolpyruvate + H2O = 7-phospho-2-dehydro-3-deoxy-D-arabino-heptonate + phosphate. The protein operates within metabolic intermediate biosynthesis; chorismate biosynthesis; chorismate from D-erythrose 4-phosphate and phosphoenolpyruvate: step 1/7. Functionally, stereospecific condensation of phosphoenolpyruvate (PEP) and D-erythrose-4-phosphate (E4P) giving rise to 3-deoxy-D-arabino-heptulosonate-7-phosphate (DAHP). This is Phospho-2-dehydro-3-deoxyheptonate aldolase, Trp-sensitive (aroH) from Salmonella typhimurium (strain LT2 / SGSC1412 / ATCC 700720).